Here is a 485-residue protein sequence, read N- to C-terminus: Adenosylhomocysteinase 2 (485 aa).

Positions 64, 139, and 205 each coordinate substrate. 206–208 (TTT) provides a ligand contact to NAD(+). 2 residues coordinate substrate: K235 and D239. Residues N240, 269-274 (GYGDVG), E292, N327, 348-350 (IGH), and N397 each bind NAD(+).

Belongs to the adenosylhomocysteinase family. NAD(+) serves as cofactor.

It carries out the reaction S-adenosyl-L-homocysteine + H2O = L-homocysteine + adenosine. It functions in the pathway amino-acid biosynthesis; L-homocysteine biosynthesis; L-homocysteine from S-adenosyl-L-homocysteine: step 1/1. Its function is as follows. Adenosylhomocysteine is a competitive inhibitor of S-adenosyl-L-methionine-dependent methyl transferase reactions; therefore adenosylhomocysteinase may play a key role in the control of methylations via regulation of the intracellular concentration of adenosylhomocysteine. This Arabidopsis thaliana (Mouse-ear cress) protein is Adenosylhomocysteinase 2 (SAHH2).